The chain runs to 352 residues: MWRFCFFLSLLFFDVSAVKSAESIFLPSQIGVEDSRVFESLSLSPVCSAADPNLNYKPVIGILTHPGEGRWDARLHSLKNYAYATNISYIAASYVKLAETGGARVIPLIYNEPEEILFQKLELVNGVIFTGGWAKTGLYYDVVEKIFNKVMEKNDAGEHFPVYAMCLGFEILSMIISQNRDILERFNSVNYASSLQFFKNVNIEATVFQRFPPELLKKLSADCLVMQNHYFGISPDNFQGNPYLSSFFNIVTTSADKDSKTFVSTIRSKRYPVTAFQWHPEKNAFEWGSSEIPHSEDAIQVTQHAANYLVSEARKSMNRPSSEKVLSNLIYNYKPTYSGYKGSGDDEVYIFT.

The signal sequence occupies residues 1–19 (MWRFCFFLSLLFFDVSAVK). The Gamma-glutamyl hydrolase domain maps to 49–352 (AADPNLNYKP…SGDDEVYIFT (304 aa)). Residue cysteine 166 is the Nucleophile of the active site. Histidine 279 is a catalytic residue.

It belongs to the peptidase C26 family.

It is found in the vacuole. Its subcellular location is the secreted. The protein resides in the extracellular space. It localises to the cell wall. The catalysed reaction is (6S)-5,6,7,8-tetrahydrofolyl-(gamma-L-Glu)(n) + (n-1) H2O = (6S)-5,6,7,8-tetrahydrofolate + (n-1) L-glutamate. Its function is as follows. Cleaves the polyglutamate sidechains of folate polyglutamates in the vacuole. Is important for polyglutamyl tail length determination before vacuolar exit. Plays a role on folate stability and intracellular folate content. This Arabidopsis thaliana (Mouse-ear cress) protein is Probable gamma-glutamyl hydrolase 3 (GGH3).